Consider the following 413-residue polypeptide: MAEHSFDVKAVIKDFPILEQKVNNKRLAYLDSTATSQTPVQVLNVLDDYYKRYNSNVHRGVHTLGSLATDGYENARETVRRFINAKYFEEIIFTRGTTASINIVAHSYGDANISEGDEIVVTEMEHHANIVPWQQLAKRKNATLKFIPMTKDGELQLDDIKATINDKTKIVAIAHVSNVLGTINDVKTIAKIAHEHGAVISVDGAQSAPHMALDMQDIDADFYSFSGHKMLGPTGIGVLYGKRELLQNMEPVEFGGDMIDFVSKYDSTWADLPTKFEAGTPLIAQAIGLAEAIHYIENLGFNAIHQHEKELTEYAYEQMLTIDGLEIYGPPKDRRAGVITFNLADIHPHDVATAVDTEGVAVRAGHHCAQPLMKWLGVSSTARASFYVYNTKEDVDQLVQALKQTKEFFSYEF.

Residue lysine 229 is modified to N6-(pyridoxal phosphate)lysine. Cysteine 368 functions as the Cysteine persulfide intermediate in the catalytic mechanism.

Belongs to the class-V pyridoxal-phosphate-dependent aminotransferase family. Csd subfamily. Requires pyridoxal 5'-phosphate as cofactor.

It carries out the reaction (sulfur carrier)-H + L-cysteine = (sulfur carrier)-SH + L-alanine. In terms of biological role, catalyzes the removal of elemental sulfur and selenium atoms from L-cysteine, L-cystine, L-selenocysteine, and L-selenocystine to produce L-alanine. This chain is Probable cysteine desulfurase (csd), found in Staphylococcus epidermidis (strain ATCC 12228 / FDA PCI 1200).